Consider the following 81-residue polypeptide: Cytotoxin I-like T-15 (81 aa).

The signal sequence occupies residues 1-21 (MKTLLLTLVVVTIVCLDLGYT). Cystine bridges form between cysteine 24/cysteine 42, cysteine 35/cysteine 59, cysteine 63/cysteine 74, and cysteine 75/cysteine 80.

Belongs to the three-finger toxin family. Short-chain subfamily. Type IA cytotoxin sub-subfamily. As to quaternary structure, monomer in solution; Homodimer and oligomer in the presence of negatively charged lipids forming a pore with a size ranging between 20 and 30 Angstroms. As to expression, expressed by the venom gland.

The protein resides in the secreted. It localises to the target cell membrane. Functionally, shows cytolytic activity on many different cells by forming pore in lipid membranes. In vivo, increases heart rate or kills the animal by cardiac arrest. In addition, it binds to heparin with high affinity, interacts with Kv channel-interacting protein 1 (KCNIP1) in a calcium-independent manner, and binds to integrin alpha-V/beta-3 (ITGAV/ITGB3) with moderate affinity. The polypeptide is Cytotoxin I-like T-15 (Naja atra (Chinese cobra)).